The sequence spans 229 residues: Complex I assembly factor TMEM126B, mitochondrial (229 aa).

The next 4 membrane-spanning stretches (helical) occupy residues 71 to 91, 109 to 129, 140 to 160, and 198 to 218; these read IRGT…ANLV, LTTL…TDAL, VLRS…ALAF, and VPLL…YAVC.

In terms of assembly, part of the mitochondrial complex I assembly/MCIA complex that comprises at least the core subunits TMEM126B, NDUFAF1, ECSIT and ACAD9 and complement subunits such as COA1 and TMEM186. Associates with the intermediate 370 kDa subcomplex of incompletely assembled complex I. Interacts with TMEM70.

It is found in the mitochondrion membrane. Functionally, as part of the MCIA complex, involved in the assembly of the mitochondrial complex I. Participates in constructing the membrane arm of complex I. This chain is Complex I assembly factor TMEM126B, mitochondrial, found in Rattus norvegicus (Rat).